We begin with the raw amino-acid sequence, 318 residues long: Pyrroline-5-carboxylate reductase ucsG (318 aa).

Belongs to the pyrroline-5-carboxylate reductase family.

Its pathway is mycotoxin biosynthesis. Pyrroline-5-carboxylate reductase; part of the gene cluster that mediates the biosynthesis of UCS1025A, a member of the pyrrolizidinone family that acts as a strong telomerase inhibitor and displays potent antibacterial and antitumor properties. These compounds share a hemiaminal-containing pyrrolizidinone core fused with a gamma-lactone, giving a furopyrrolizidine that is connected to a decalin fragment. The polyketide synthase module (PKS) of the PKS-NRPS ucsA is responsible for the synthesis of the polyketide backbone via the condensation of an acetyl-CoA starter unit with 6 malonyl-CoA units. The downstream nonribosomal peptide synthetase (NRPS) module then amidates the carboxyl end of the polyketide with a 2S,3S-methylproline derived from L-isoleucine by the 2-oxoglutarate-dependent dioxygenase ucsF which converts L-isoleucine to (4S,5S)-4-methylpyrroline-5-carboxylate that is further converted to 2S,3S-methylproline by the pyrroline-5-carboxylate reductase ucsG. Reductive release of the completed aminoacyl polyketide from the assembly line can form the 3-pyrrolin-2-one structure via an intramolecular Knoevenagel reaction. Because ucsA lacks a designated enoylreductase (ER) domain, the required activity is provided the enoyl reductase ucsL. This keto acyclic precursor is the substrate of the Diels-Alderase ucsH, that catalyzes the Diels-Alder cycloaddition. Oxidation of the 3S-methyl group to a carboxylate by the cytochrome P450 monooxygenase ucsK allows an oxa-Michael cyclization that might involve the reductase/dehydrogenase ucsI and which furnishes the furopyrrolizidine. The oxidase ucsJ likely plays a critical role in stereoselective reduction of the C5-C6 double bond to afford the required R-configured carboxylate group. Further enolization and oxidation at C5 by an unidentified enzyme affords the last intermediate that can undergo oxa-Michael cyclization to yield UCS1025A. This is Pyrroline-5-carboxylate reductase ucsG from Acremonium sp.